The primary structure comprises 221 residues: Endo-1,4-beta-xylanase I (221 aa).

An N-terminal signal peptide occupies residues 1–30; that stretch reads MVSFTSIITAAVAATGALAAPATDVSLVAR. The region spanning 31-219 is the GH11 domain; sequence QNTPNGEGTH…STGNAQITVN (189 aa). The Nucleophile role is filled by E115. Positions 126–157 are disordered; it reads DPSSQSQNKGTVTSDGSSYKIAQSTRTNQPSI. E206 acts as the Proton donor in catalysis.

It belongs to the glycosyl hydrolase 11 (cellulase G) family. In terms of processing, the N-terminus is blocked.

The protein localises to the secreted. The enzyme catalyses Endohydrolysis of (1-&gt;4)-beta-D-xylosidic linkages in xylans.. The protein operates within glycan degradation; xylan degradation. Functionally, major xylan-degrading enzyme. Contributes to the hydrolysis of arabinoxylan, the major component of maize cell-walls. This Cochliobolus carbonum (Maize leaf spot fungus) protein is Endo-1,4-beta-xylanase I (XYL1).